We begin with the raw amino-acid sequence, 1124 residues long: EGF and laminin G domain-containing protein (1124 aa).

Residues 1–1055 lie on the Extracellular side of the membrane; it reads RTFVKKYSAS…KLQAEDDDKT (1055 aa). 2 consecutive Laminin G-like domains span residues 8–203 and 210–369; these read SASR…NQKC and PFTF…WSGC. Disulfide bonds link Cys-167–Cys-203, Cys-342–Cys-369, Cys-375–Cys-386, Cys-380–Cys-395, Cys-397–Cys-412, Cys-761–Cys-788, Cys-792–Cys-803, Cys-797–Cys-812, and Cys-814–Cys-824. Residues 371–413 enclose the EGF-like 1 domain; it reads ITDFCIFSPCLHGGECTQTGKTFSCGCSGTGYDKGPNSLSVCQ. The Laminin G-like 3 domain maps to 621–788; it reads NTATFVNEDG…GEAVFVKSGC (168 aa). In terms of domain architecture, EGF-like 2 spans 789 to 825; that stretch reads GAACENNSCKNHAKCLDNYNVYFCDCSKTPYYGYFCH. Residues 1011 to 1047 form a disordered region; the sequence is RATCGPEPKVPEIPTPRPVGQRADVSTPQGITTNPKL. A compositionally biased stretch (polar residues) spans 1034 to 1046; that stretch reads DVSTPQGITTNPK. Residues 1056–1076 form a helical membrane-spanning segment; that stretch reads AIIVVVVLILVLLLVVLILVI. The Cytoplasmic portion of the chain corresponds to 1077 to 1124; it reads YWYWARHKGEYHTHEDDEELKATDPYIEPAAPRKLKGEEPEKKKEWYI. The segment at 1090–1124 is disordered; that stretch reads HEDDEELKATDPYIEPAAPRKLKGEEPEKKKEWYI. Over residues 1111–1124 the composition is skewed to basic and acidic residues; sequence LKGEEPEKKKEWYI.

Component of the acid-insoluble organic matrix of the aragonitic skeleton (at protein level).

The protein localises to the membrane. The protein is EGF and laminin G domain-containing protein of Acropora millepora (Staghorn coral).